Here is a 177-residue protein sequence, read N- to C-terminus: ATP synthase subunit delta (177 aa).

Belongs to the ATPase delta chain family. F-type ATPases have 2 components, F(1) - the catalytic core - and F(0) - the membrane proton channel. F(1) has five subunits: alpha(3), beta(3), gamma(1), delta(1), epsilon(1). F(0) has three main subunits: a(1), b(2) and c(10-14). The alpha and beta chains form an alternating ring which encloses part of the gamma chain. F(1) is attached to F(0) by a central stalk formed by the gamma and epsilon chains, while a peripheral stalk is formed by the delta and b chains.

It is found in the cell inner membrane. Functionally, f(1)F(0) ATP synthase produces ATP from ADP in the presence of a proton or sodium gradient. F-type ATPases consist of two structural domains, F(1) containing the extramembraneous catalytic core and F(0) containing the membrane proton channel, linked together by a central stalk and a peripheral stalk. During catalysis, ATP synthesis in the catalytic domain of F(1) is coupled via a rotary mechanism of the central stalk subunits to proton translocation. Its function is as follows. This protein is part of the stalk that links CF(0) to CF(1). It either transmits conformational changes from CF(0) to CF(1) or is implicated in proton conduction. The protein is ATP synthase subunit delta of Klebsiella pneumoniae subsp. pneumoniae (strain ATCC 700721 / MGH 78578).